A 316-amino-acid polypeptide reads, in one-letter code: Ribosomal RNA small subunit methyltransferase H (316 aa).

Residues 35-37 (AGH), D55, F84, D105, and Q112 each bind S-adenosyl-L-methionine.

It belongs to the methyltransferase superfamily. RsmH family.

Its subcellular location is the cytoplasm. The catalysed reaction is cytidine(1402) in 16S rRNA + S-adenosyl-L-methionine = N(4)-methylcytidine(1402) in 16S rRNA + S-adenosyl-L-homocysteine + H(+). In terms of biological role, specifically methylates the N4 position of cytidine in position 1402 (C1402) of 16S rRNA. This is Ribosomal RNA small subunit methyltransferase H from Streptococcus pneumoniae (strain Taiwan19F-14).